A 461-amino-acid polypeptide reads, in one-letter code: Cysteine--tRNA ligase (461 aa).

C28 provides a ligand contact to Zn(2+). The short motif at 30 to 40 (ITIYDLCHIGH) is the 'HIGH' region element. Positions 209, 234, and 238 each coordinate Zn(2+). The short motif at 266–270 (KMSKS) is the 'KMSKS' region element. K269 is an ATP binding site.

It belongs to the class-I aminoacyl-tRNA synthetase family. As to quaternary structure, monomer. The cofactor is Zn(2+).

It localises to the cytoplasm. The catalysed reaction is tRNA(Cys) + L-cysteine + ATP = L-cysteinyl-tRNA(Cys) + AMP + diphosphate. The protein is Cysteine--tRNA ligase of Yersinia enterocolitica serotype O:8 / biotype 1B (strain NCTC 13174 / 8081).